Reading from the N-terminus, the 313-residue chain is tRNA-cytidine(32) 2-sulfurtransferase (313 aa).

Positions 47–52 (SGGKDS) match the PP-loop motif motif. Residues C122, C125, and C213 each coordinate [4Fe-4S] cluster.

It belongs to the TtcA family. In terms of assembly, homodimer. Mg(2+) serves as cofactor. It depends on [4Fe-4S] cluster as a cofactor.

The protein localises to the cytoplasm. The catalysed reaction is cytidine(32) in tRNA + S-sulfanyl-L-cysteinyl-[cysteine desulfurase] + AH2 + ATP = 2-thiocytidine(32) in tRNA + L-cysteinyl-[cysteine desulfurase] + A + AMP + diphosphate + H(+). Its pathway is tRNA modification. Functionally, catalyzes the ATP-dependent 2-thiolation of cytidine in position 32 of tRNA, to form 2-thiocytidine (s(2)C32). The sulfur atoms are provided by the cysteine/cysteine desulfurase (IscS) system. In Yersinia pseudotuberculosis serotype IB (strain PB1/+), this protein is tRNA-cytidine(32) 2-sulfurtransferase.